The primary structure comprises 584 residues: Potassium-transporting ATPase potassium-binding subunit (584 aa).

10 helical membrane passes run 8 to 28, 65 to 85, 139 to 159, 172 to 192, 262 to 282, 292 to 312, 398 to 418, 440 to 460, 507 to 527, and 544 to 564; these read FLVLIGVILALLLIPTGEFMF, SFAVAMMIFSVIGIVFVFILQ, VQNFMSAAVGMVVLVAFIYGF, VLLLRSIWILLPLSFVIALVL, FTDLVEIVAILLIPVSLCFMF, GIAILIAMMILFVPLLGLGIW, GLYCMLVFVIIAMFIAGLMVG, ILIPIFLILIGTAIAVSITAG, MFVGRYAIAIITLALAGAFVA, and LFIIWVVFTILIIGALSFLPA.

Belongs to the KdpA family. As to quaternary structure, the system is composed of three essential subunits: KdpA, KdpB and KdpC.

It is found in the cell membrane. Its function is as follows. Part of the high-affinity ATP-driven potassium transport (or Kdp) system, which catalyzes the hydrolysis of ATP coupled with the electrogenic transport of potassium into the cytoplasm. This subunit binds the extracellular potassium ions and delivers the ions to the membrane domain of KdpB through an intramembrane tunnel. The chain is Potassium-transporting ATPase potassium-binding subunit from Methanoregula boonei (strain DSM 21154 / JCM 14090 / 6A8).